The following is a 206-amino-acid chain: Small ribosomal subunit protein uS4 (206 aa).

Residues 96–156 enclose the S4 RNA-binding domain; sequence TRLDNVVYRM…EKSRTQARIK (61 aa).

The protein belongs to the universal ribosomal protein uS4 family. As to quaternary structure, part of the 30S ribosomal subunit. Contacts protein S5. The interaction surface between S4 and S5 is involved in control of translational fidelity.

Its function is as follows. One of the primary rRNA binding proteins, it binds directly to 16S rRNA where it nucleates assembly of the body of the 30S subunit. Functionally, with S5 and S12 plays an important role in translational accuracy. This chain is Small ribosomal subunit protein uS4, found in Shewanella putrefaciens (strain CN-32 / ATCC BAA-453).